The following is a 412-amino-acid chain: Multifunctional CCA protein (412 aa).

Residues Gly-8 and Arg-11 each coordinate ATP. 2 residues coordinate CTP: Gly-8 and Arg-11. Mg(2+) contacts are provided by Asp-21 and Asp-23. Positions 91, 137, and 140 each coordinate ATP. Residues Arg-91, Arg-137, and Arg-140 each contribute to the CTP site. The HD domain maps to 228–329 (TGIHTMMVLA…LKVFDKADAW (102 aa)).

Belongs to the tRNA nucleotidyltransferase/poly(A) polymerase family. Bacterial CCA-adding enzyme type 1 subfamily. In terms of assembly, monomer. Can also form homodimers and oligomers. Requires Mg(2+) as cofactor. It depends on Ni(2+) as a cofactor.

It catalyses the reaction a tRNA precursor + 2 CTP + ATP = a tRNA with a 3' CCA end + 3 diphosphate. The enzyme catalyses a tRNA with a 3' CCA end + 2 CTP + ATP = a tRNA with a 3' CCACCA end + 3 diphosphate. Functionally, catalyzes the addition and repair of the essential 3'-terminal CCA sequence in tRNAs without using a nucleic acid template. Adds these three nucleotides in the order of C, C, and A to the tRNA nucleotide-73, using CTP and ATP as substrates and producing inorganic pyrophosphate. tRNA 3'-terminal CCA addition is required both for tRNA processing and repair. Also involved in tRNA surveillance by mediating tandem CCA addition to generate a CCACCA at the 3' terminus of unstable tRNAs. While stable tRNAs receive only 3'-terminal CCA, unstable tRNAs are marked with CCACCA and rapidly degraded. This chain is Multifunctional CCA protein, found in Aeromonas hydrophila subsp. hydrophila (strain ATCC 7966 / DSM 30187 / BCRC 13018 / CCUG 14551 / JCM 1027 / KCTC 2358 / NCIMB 9240 / NCTC 8049).